The primary structure comprises 240 residues: Uridylate kinase (240 aa).

12–15 contributes to the ATP binding site; that stretch reads KLSG. The interval 20 to 25 is involved in allosteric activation by GTP; it reads GEDGFG. Gly-54 contributes to the UMP binding site. ATP is bound by residues Gly-55 and Arg-59. UMP-binding positions include Asp-74 and 135 to 142; that span reads TGNPYFST. ATP-binding residues include Asn-163, Tyr-169, and Asp-172.

The protein belongs to the UMP kinase family. As to quaternary structure, homohexamer.

Its subcellular location is the cytoplasm. It catalyses the reaction UMP + ATP = UDP + ADP. It participates in pyrimidine metabolism; CTP biosynthesis via de novo pathway; UDP from UMP (UMPK route): step 1/1. Its activity is regulated as follows. Allosterically activated by GTP. Probably inhibited by UTP. Its function is as follows. Catalyzes the reversible phosphorylation of UMP to UDP. The protein is Uridylate kinase (pyrH) of Enterococcus faecalis (strain ATCC 700802 / V583).